The sequence spans 268 residues: Bis(5'-nucleosyl)-tetraphosphatase, symmetrical (268 aa).

It belongs to the Ap4A hydrolase family.

The catalysed reaction is P(1),P(4)-bis(5'-adenosyl) tetraphosphate + H2O = 2 ADP + 2 H(+). Hydrolyzes diadenosine 5',5'''-P1,P4-tetraphosphate to yield ADP. In Nitrosomonas europaea (strain ATCC 19718 / CIP 103999 / KCTC 2705 / NBRC 14298), this protein is Bis(5'-nucleosyl)-tetraphosphatase, symmetrical.